A 349-amino-acid polypeptide reads, in one-letter code: Protein RecA (349 aa).

65-72 (GPESSGKT) is an ATP binding site.

Belongs to the RecA family.

The protein resides in the cytoplasm. Its function is as follows. Can catalyze the hydrolysis of ATP in the presence of single-stranded DNA, the ATP-dependent uptake of single-stranded DNA by duplex DNA, and the ATP-dependent hybridization of homologous single-stranded DNAs. It interacts with LexA causing its activation and leading to its autocatalytic cleavage. The chain is Protein RecA from Clostridium acetobutylicum (strain ATCC 824 / DSM 792 / JCM 1419 / IAM 19013 / LMG 5710 / NBRC 13948 / NRRL B-527 / VKM B-1787 / 2291 / W).